Here is a 1765-residue protein sequence, read N- to C-terminus: Tight junction protein ZO-1 (1765 aa).

Residues 23–110 (TVTLHRAPGF…NAKITIRRKK (88 aa)) enclose the PDZ 1 domain. Over residues 102-112 (AKITIRRKKKV) the composition is skewed to basic residues. The disordered stretch occupies residues 102-189 (AKITIRRKKK…QPAKPTKVTL (88 aa)). Positions 123–136 (PVSDNEDDSYDEDV) are enriched in acidic residues. Position 125 is a phosphoserine (S125). Y132 is subject to Phosphotyrosine. The segment covering 149–175 (RRGEKSWARDRSASRDRSLSPRSDRRS) has biased composition (basic and acidic residues). Phosphoserine is present on residues S175, S178, and S179. At T185 the chain carries Phosphothreonine. Residues 186-264 (KVTLVKSRKN…KLKMVVQRDE (79 aa)) enclose the PDZ 2 domain. 2 positions are modified to phosphoserine: S212 and S241. Position 267 is a phosphothreonine (T267). Phosphoserine is present on residues S275, S277, S280, S284, S290, S294, S297, S300, S323, S329, S334, S337, and S353. The interval 296–363 (ASDHSVRSHD…TPVKHVDDHT (68 aa)) is disordered. Residues 299-308 (HSVRSHDRPP) are compositionally biased toward basic and acidic residues. Polar residues predominate over residues 325 to 338 (HSTQSPQQPSNGSL). Residue T354 is modified to Phosphothreonine. The PDZ 3 domain maps to 421–502 (SMKLVKFRKG…GEEVTILAQK (82 aa)). Residues 516–584 (GDSFYIRTHF…PNKNRAEQLA (69 aa)) enclose the SH3 domain. Residues S617 and S622 each carry the phosphoserine modification. The tract at residues 633–876 (YERVVLREAG…GTPPESAITR (244 aa)) is occludin (OCLN)-binding region. A Guanylate kinase-like domain is found at 690-791 (RLHTIKQIID…WYGALKEAIQ (102 aa)). Phosphothreonine is present on T809. A phosphoserine mark is found at S810 and S821. Residue Y822 is modified to Phosphotyrosine. Phosphoserine occurs at positions 824, 828, and 837. Disordered stretches follow at residues 825–941 (APGS…PASS) and 1023–1042 (ALGH…YDPQ). Phosphothreonine occurs at positions 846, 848, 854, 861, and 868. The span at 879–892 (EPVREDSSGMHHEN) shows a compositional bias: basic and acidic residues. Over residues 893-906 (QTYPPYSPQAQPQA) the composition is skewed to low complexity. S912 carries the post-translational modification Phosphoserine. Phosphoserine is present on S1071. The segment at 1092 to 1585 (SYYDDKQPYP…SSTQPPEFDS (494 aa)) is disordered. Positions 1106-1124 (DTQHPRDLDSRQHPEEASE) are enriched in basic and acidic residues. Phosphotyrosine occurs at positions 1139 and 1164. The tract at residues 1150–1370 (RTSTLRHEEQ…FDRRSFESKP (221 aa)) is actin-binding region (ABR). Composition is skewed to basic and acidic residues over residues 1268 to 1285 (KMFE…KDVN) and 1335 to 1346 (PPEDIVRSNHYD). Phosphotyrosine is present on Y1353. At S1365 the chain carries Phosphoserine. The span at 1388–1399 (SQSQPNFSSYSS) shows a compositional bias: low complexity. Basic and acidic residues predominate over residues 1401-1418 (GKPETDAMDRSFSEKRYD). A Phosphoserine modification is found at S1411. Composition is skewed to polar residues over residues 1442 to 1468 (NSSL…NSYI) and 1509 to 1519 (GAEQTQKTITP). Residues 1535–1544 (PFERKFESPK) show a composition bias toward basic and acidic residues. Residues S1542 and S1614 each carry the phosphoserine modification. One can recognise a ZU5 domain in the interval 1631–1765 (ATARGIFNSN…NCVSVLIDHF (135 aa)).

It belongs to the MAGUK family. In terms of assembly, homodimer. Forms heterodimers TJP3. Forms a heterodimer (via PDZ2 domain) with TJP2/ZO2 (via PDZ2 domain). Interacts with OCLN. Interacts with CALM, claudins, CGN/cingulin, CXADR, GJA12, GJD3 and UBN1. Interacts (via ZU5 domain) with CDC42BPB and MYZAP. Interacts (via PDZ domain) with GJA1. Interacts (via PDZ domains) with ANKRD2. Interacts with BVES (via the C-terminus cytoplasmic tail). Interacts with HSPA4. Interacts with KIRREL1. Interacts with DLL1. Interacts with USP53 (via the C-terminal region). Interacts with DNMBP (via C-terminal domain); required for the apical cell-cell junction localization of DNMBP. Interacts with SPEF1. Interacts (via N-terminus) with CTNNA1. Interacts with CLDN18. Interacts with CLDN16 (via TRV motif); this is a prerequisite for anchoring of CLDN16 at the tight junction. Interacts with PKP1; the interaction facilitates TJP1/ZO-1 localization to the plasma membrane. Post-translationally, phosphorylated at tyrosine redidues in response to epidermal growth factor (EGF). This response is dependent on an intact actin microfilament system. Dephosphorylated by Ptprj.

The protein resides in the cell membrane. It is found in the cell junction. It localises to the tight junction. The protein localises to the gap junction. Its function is as follows. TjpP1, Tjp2, and Tjp3 are closely related scaffolding proteins that link tight junction (TJ) transmembrane proteins such as claudins, junctional adhesion molecules, and occludin to the actin cytoskeleton. The tight junction acts to limit movement of substances through the paracellular space and as a boundary between the compositionally distinct apical and basolateral plasma membrane domains of epithelial and endothelial cells. Necessary for lumenogenesis, and particularly efficient epithelial polarization and barrier formation. Plays a role in the regulation of cell migration by targeting Cdc42bpb to the leading edge of migrating cells. Plays an important role in podosome formation and associated function, thus regulating cell adhesion and matrix remodeling. With Tjp2 and Tjp3, participates in the junctional retention and stability of the transcription factor Dbpa, but is not involved in its shuttling to the nucleus. May play a role in mediating cell morphology changes during ameloblast differentiation via its role in tight junctions. In Rattus norvegicus (Rat), this protein is Tight junction protein ZO-1.